Here is a 98-residue protein sequence, read N- to C-terminus: NADH-ubiquinone oxidoreductase chain 4L (98 aa).

The next 3 helical transmembrane spans lie at 1–21 (MSLVHMNIALAFTVALLGLLM), 29–49 (SLLCLEGMMLTLFIMGTIMIL), and 61–81 (IILLVFAACEAAVGLSLLVMV).

Belongs to the complex I subunit 4L family. Core subunit of respiratory chain NADH dehydrogenase (Complex I) which is composed of 45 different subunits.

It is found in the mitochondrion inner membrane. It carries out the reaction a ubiquinone + NADH + 5 H(+)(in) = a ubiquinol + NAD(+) + 4 H(+)(out). Its function is as follows. Core subunit of the mitochondrial membrane respiratory chain NADH dehydrogenase (Complex I) which catalyzes electron transfer from NADH through the respiratory chain, using ubiquinone as an electron acceptor. Part of the enzyme membrane arm which is embedded in the lipid bilayer and involved in proton translocation. This is NADH-ubiquinone oxidoreductase chain 4L (MT-ND4L) from Sorex unguiculatus (Long-clawed shrew).